A 215-amino-acid chain; its full sequence is UPF0056 membrane protein BU267 (215 aa).

6 helical membrane-spanning segments follow: residues 14-34 (FFIGLCALVNPIGMIPIFTTM), 56-76 (LILLISLFFGSNILNIFGISI), 81-101 (IAGGILIISIAFSMISGQFIK), 120-140 (VVPLAMPLIAGPGAISSTIVW), 150-170 (LFLCSLVIFLFSFVCWLCFEA), and 189-209 (IMGLLLMSLGIEFISTGIGAI).

The protein belongs to the UPF0056 (MarC) family.

It localises to the cell membrane. This is UPF0056 membrane protein BU267 from Buchnera aphidicola subsp. Acyrthosiphon pisum (strain APS) (Acyrthosiphon pisum symbiotic bacterium).